The primary structure comprises 115 residues: NADH-ubiquinone oxidoreductase chain 3 (115 aa).

3 consecutive transmembrane segments (helical) span residues 3-23, 55-75, and 84-104; these read LIMTLFINITLTSLLVLIAFW, FFLVAITFLLFDLEIALLLPL, and LTTMLTTALLLISLLAVSLAY.

Belongs to the complex I subunit 3 family. Core subunit of respiratory chain NADH dehydrogenase (Complex I) which is composed of 45 different subunits. Interacts with TMEM186. Interacts with TMEM242.

It localises to the mitochondrion inner membrane. It carries out the reaction a ubiquinone + NADH + 5 H(+)(in) = a ubiquinol + NAD(+) + 4 H(+)(out). Functionally, core subunit of the mitochondrial membrane respiratory chain NADH dehydrogenase (Complex I) which catalyzes electron transfer from NADH through the respiratory chain, using ubiquinone as an electron acceptor. Essential for the catalytic activity of complex I. The chain is NADH-ubiquinone oxidoreductase chain 3 from Ailurus fulgens (Himalayan red panda).